The following is a 353-amino-acid chain: tRNA N6-adenosine threonylcarbamoyltransferase (353 aa).

2 residues coordinate Fe cation: His119 and His123. Residues 145-149, Asp178, Gly191, and Asn285 contribute to the substrate site; that span reads LVSGG. Asp313 provides a ligand contact to Fe cation.

The protein belongs to the KAE1 / TsaD family. Fe(2+) is required as a cofactor.

The protein localises to the cytoplasm. The enzyme catalyses L-threonylcarbamoyladenylate + adenosine(37) in tRNA = N(6)-L-threonylcarbamoyladenosine(37) in tRNA + AMP + H(+). Required for the formation of a threonylcarbamoyl group on adenosine at position 37 (t(6)A37) in tRNAs that read codons beginning with adenine. Is involved in the transfer of the threonylcarbamoyl moiety of threonylcarbamoyl-AMP (TC-AMP) to the N6 group of A37, together with TsaE and TsaB. TsaD likely plays a direct catalytic role in this reaction. The chain is tRNA N6-adenosine threonylcarbamoyltransferase from Magnetococcus marinus (strain ATCC BAA-1437 / JCM 17883 / MC-1).